The chain runs to 306 residues: Ribonuclease Z (306 aa).

Histidine 61, histidine 63, aspartate 65, histidine 66, histidine 137, aspartate 207, and histidine 263 together coordinate Zn(2+). The Proton acceptor role is filled by aspartate 65.

It belongs to the RNase Z family. Homodimer. Zn(2+) serves as cofactor.

The enzyme catalyses Endonucleolytic cleavage of RNA, removing extra 3' nucleotides from tRNA precursor, generating 3' termini of tRNAs. A 3'-hydroxy group is left at the tRNA terminus and a 5'-phosphoryl group is left at the trailer molecule.. In terms of biological role, zinc phosphodiesterase, which displays some tRNA 3'-processing endonuclease activity. Probably involved in tRNA maturation, by removing a 3'-trailer from precursor tRNA. The protein is Ribonuclease Z of Thermococcus sibiricus (strain DSM 12597 / MM 739).